The following is a 180-amino-acid chain: Beta-lactoglobulin (180 aa).

A signal peptide spans 1 to 18; sequence MKCLLLALGLALACGIQA. Intrachain disulfides connect Cys-84/Cys-178, Cys-124/Cys-137, and Cys-124/Cys-139.

The protein belongs to the calycin superfamily. Lipocalin family. Under physiological conditions beta-lactoglobulin exists as an equilibrium mixture of monomeric and dimeric forms. Interaction with LMBR1L is controversial. Post-translationally, alternate disulfide bonds occur in equal amounts. As to expression, synthesized in mammary gland and secreted in milk.

Its subcellular location is the secreted. Its function is as follows. Primary component of whey, it binds retinol and is probably involved in the transport of that molecule. In Capra hircus (Goat), this protein is Beta-lactoglobulin (LGB).